The primary structure comprises 283 residues: Diaminopimelate epimerase (283 aa).

2 residues coordinate substrate: Asn-13 and Asn-66. The active-site Proton donor is the Cys-75. Residues 76–77 (GN), Asn-165, Asn-198, and 216–217 (ER) each bind substrate. Cys-225 serves as the catalytic Proton acceptor. A substrate-binding site is contributed by 226–227 (GT).

This sequence belongs to the diaminopimelate epimerase family. Homodimer.

Its subcellular location is the cytoplasm. The catalysed reaction is (2S,6S)-2,6-diaminopimelate = meso-2,6-diaminopimelate. The protein operates within amino-acid biosynthesis; L-lysine biosynthesis via DAP pathway; DL-2,6-diaminopimelate from LL-2,6-diaminopimelate: step 1/1. Catalyzes the stereoinversion of LL-2,6-diaminopimelate (L,L-DAP) to meso-diaminopimelate (meso-DAP), a precursor of L-lysine and an essential component of the bacterial peptidoglycan. The chain is Diaminopimelate epimerase from Acaryochloris marina (strain MBIC 11017).